The sequence spans 499 residues: Laccase (499 aa).

Plastocyanin-like domains are found at residues V2–Y127 and V139–Y281. 2 N-linked (GlcNAc...) asparagine glycosylation sites follow: N51 and N54. H64, H66, H109, and H111 together coordinate Cu cation. Intrachain disulfides connect C85–C488 and C117–C205. Residue Y196 is modified to 3'-nitrotyrosine. 4 N-linked (GlcNAc...) asparagine glycosylation sites follow: N208, N217, N292, and N333. The 123-residue stretch at S348–D470 folds into the Plastocyanin-like 3 domain. Position 372 is a 3'-nitrotyrosine (Y372). A glycan (N-linked (GlcNAc...) asparagine) is linked at N377. Residues H395, H398, and H400 each coordinate Cu cation. Residues N416 and N436 are each glycosylated (N-linked (GlcNAc...) asparagine). Cu cation is bound by residues H452, C453, H454, and H458.

Belongs to the multicopper oxidase family. It depends on Cu cation as a cofactor.

It is found in the secreted. The enzyme catalyses 4 hydroquinone + O2 = 4 benzosemiquinone + 2 H2O. In terms of biological role, lignin degradation and detoxification of lignin-derived products. In Trametes maxima (White-rot fungus), this protein is Laccase.